We begin with the raw amino-acid sequence, 190 residues long: Probable nicotinate-nucleotide adenylyltransferase (190 aa).

Belongs to the NadD family.

It catalyses the reaction nicotinate beta-D-ribonucleotide + ATP + H(+) = deamido-NAD(+) + diphosphate. It functions in the pathway cofactor biosynthesis; NAD(+) biosynthesis; deamido-NAD(+) from nicotinate D-ribonucleotide: step 1/1. Functionally, catalyzes the reversible adenylation of nicotinate mononucleotide (NaMN) to nicotinic acid adenine dinucleotide (NaAD). The polypeptide is Probable nicotinate-nucleotide adenylyltransferase (Frankia casuarinae (strain DSM 45818 / CECT 9043 / HFP020203 / CcI3)).